A 389-amino-acid polypeptide reads, in one-letter code: Naringenin-chalcone synthase (389 aa).

C164 is an active-site residue.

Belongs to the thiolase-like superfamily. Chalcone/stilbene synthases family. In terms of tissue distribution, expressed in glandular trichomes. Detected at low levels in female flowers, stems, seeds, leaves and roots.

The protein resides in the cytoplasm. The catalysed reaction is (E)-4-coumaroyl-CoA + 3 malonyl-CoA + 3 H(+) = 2',4,4',6'-tetrahydroxychalcone + 3 CO2 + 4 CoA. Functionally, chalcone synthase that can also use isovaleryl-CoA, isobutyryl-CoA or hexanoyl-CoA as substrates, but that is unable to produce olivetol or olivetolic acid. The chain is Naringenin-chalcone synthase (CHS) from Cannabis sativa (Hemp).